A 658-amino-acid chain; its full sequence is Squalene--hopene cyclase (658 aa).

The PFTB 1 repeat unit spans residues 69 to 110 (EAKIGRYLRRIQGEHGGWSLFYGGDLDLSATVKAYFALKMIG). Asp-392 functions as the Proton donor in the catalytic mechanism. PFTB repeat units follow at residues 418 to 459 (KARA…GALL), 486 to 526 (MKAA…NVAA), and 534 to 584 (IQKA…GLMA).

Belongs to the terpene cyclase/mutase family.

Its subcellular location is the cell membrane. It carries out the reaction squalene = hop-22(29)-ene. The catalysed reaction is squalene + H2O = hopan-22-ol. It functions in the pathway secondary metabolite biosynthesis; hopanoid biosynthesis. Catalyzes the cyclization of squalene into hopene. This Zymomonas mobilis subsp. mobilis (strain ATCC 31821 / ZM4 / CP4) protein is Squalene--hopene cyclase (shc).